We begin with the raw amino-acid sequence, 81 residues long: Beta-catenin-interacting protein 1 (81 aa).

Ser-59 carries the phosphoserine modification.

It belongs to the CTNNBIP1 family. In terms of assembly, binds CTNNB1. In terms of tissue distribution, highly expressed in heart, brain, liver and skeletal muscle. Detected at low levels in kidney, testis and lung.

The protein localises to the cytoplasm. The protein resides in the nucleus. Functionally, prevents the interaction between CTNNB1 and TCF family members, and acts as a negative regulator of the Wnt signaling pathway. The chain is Beta-catenin-interacting protein 1 (Ctnnbip1) from Mus musculus (Mouse).